We begin with the raw amino-acid sequence, 82 residues long: Small ribosomal subunit protein bS16 (82 aa).

This sequence belongs to the bacterial ribosomal protein bS16 family.

The chain is Small ribosomal subunit protein bS16 from Francisella philomiragia subsp. philomiragia (strain ATCC 25017 / CCUG 19701 / FSC 153 / O#319-036).